The following is a 302-amino-acid chain: MQTVIHRKTIQNSVTLKGIGVHSGKVVTLRLHPAEANTGLIFYLYKGIQKIRIPVSLDHVVDTSNATTIGDGSSNRVQTIEHLLAAVHTLGITDCIFEIDSVEVPIMDGSSLPFWEGIRSAGIRVLEETIEPITITNPIWVVDGDKYLVMLPSDELKVTYSIDFNHPLLRGQSYTTTLDESILGTDILPARTFGFLKDVEALQARGLAMGGSLDNAVVLTDDGYLNDHLRYDNECVRHKILDLVGDLAVMGRPFRGHLIASKAGHALDISLAKCIMSQVTGNELTQYKSKRIPLFSKKEAAK.

Residues histidine 82, histidine 238, and aspartate 242 each coordinate Zn(2+). Catalysis depends on histidine 265, which acts as the Proton donor.

This sequence belongs to the LpxC family. The cofactor is Zn(2+).

The enzyme catalyses a UDP-3-O-[(3R)-3-hydroxyacyl]-N-acetyl-alpha-D-glucosamine + H2O = a UDP-3-O-[(3R)-3-hydroxyacyl]-alpha-D-glucosamine + acetate. It participates in glycolipid biosynthesis; lipid IV(A) biosynthesis; lipid IV(A) from (3R)-3-hydroxytetradecanoyl-[acyl-carrier-protein] and UDP-N-acetyl-alpha-D-glucosamine: step 2/6. Functionally, catalyzes the hydrolysis of UDP-3-O-myristoyl-N-acetylglucosamine to form UDP-3-O-myristoylglucosamine and acetate, the committed step in lipid A biosynthesis. In Leptospira biflexa serovar Patoc (strain Patoc 1 / Ames), this protein is UDP-3-O-acyl-N-acetylglucosamine deacetylase.